The primary structure comprises 447 residues: N-succinylarginine dihydrolase (447 aa).

Substrate contacts are provided by residues 19 to 28 (AGLSFGNEAS), asparagine 110, and 137 to 138 (HR). Residue glutamate 174 is part of the active site. Residue arginine 212 participates in substrate binding. Residue histidine 248 is part of the active site. Substrate-binding residues include aspartate 250 and asparagine 359. The active-site Nucleophile is cysteine 365.

This sequence belongs to the succinylarginine dihydrolase family. Homodimer.

The catalysed reaction is N(2)-succinyl-L-arginine + 2 H2O + 2 H(+) = N(2)-succinyl-L-ornithine + 2 NH4(+) + CO2. It participates in amino-acid degradation; L-arginine degradation via AST pathway; L-glutamate and succinate from L-arginine: step 2/5. Catalyzes the hydrolysis of N(2)-succinylarginine into N(2)-succinylornithine, ammonia and CO(2). The sequence is that of N-succinylarginine dihydrolase from Escherichia coli O1:K1 / APEC.